Consider the following 223-residue polypeptide: N-terminal Xaa-Pro-Lys N-methyltransferase 1 (223 aa).

Met1 bears the N-acetylmethionine mark. Thr2 is subject to N-acetylthreonine; in N-terminal Xaa-Pro-Lys N-methyltransferase 1, N-terminally processed. S-adenosyl-L-methionine contacts are provided by residues Gly69, Arg74, 91-93, 119-120, and Gln135; these read DVT and LQ.

This sequence belongs to the methyltransferase superfamily. NTM1 family.

It localises to the nucleus. It catalyses the reaction N-terminal L-alanyl-L-prolyl-L-lysyl-[protein] + 3 S-adenosyl-L-methionine = N-terminal N,N,N-trimethyl-L-alanyl-L-prolyl-L-lysyl-[protein] + 3 S-adenosyl-L-homocysteine + 3 H(+). The catalysed reaction is N-terminal L-seryl-L-prolyl-L-lysyl-[protein] + 3 S-adenosyl-L-methionine = N-terminal N,N,N-trimethyl-L-seryl-L-prolyl-L-lysyl-[protein] + 3 S-adenosyl-L-homocysteine + 3 H(+). It carries out the reaction N-terminal L-prolyl-L-prolyl-L-lysyl-[protein] + 2 S-adenosyl-L-methionine = N-terminal N,N-dimethyl-L-prolyl-L-prolyl-L-lysyl-[protein] + 2 S-adenosyl-L-homocysteine + 2 H(+). Functionally, distributive alpha-N-methyltransferase that methylates the N-terminus of target proteins containing the N-terminal motif [Ala/Gly/Pro/Ser]-Pro-Lys when the initiator Met is cleaved. Specifically catalyzes mono-, di- or tri-methylation of the exposed alpha-amino group of the Ala, Gly or Ser residue in the [Ala/Gly/Ser]-Pro-Lys motif and mono- or di-methylation of Pro in the Pro-Pro-Lys motif. Some of the substrates may be primed by NTMT2-mediated monomethylation. Catalyzes the trimethylation of the N-terminal Gly in CENPA (after removal of Met-1). Responsible for the N-terminal methylation of KLHL31, MYL2, MYL3, RB1, RCC1, RPL23A and SET. Required during mitosis for normal bipolar spindle formation and chromosome segregation via its action on RCC1. In Ailuropoda melanoleuca (Giant panda), this protein is N-terminal Xaa-Pro-Lys N-methyltransferase 1 (NTMT1).